Consider the following 189-residue polypeptide: Peptidyl-tRNA hydrolase (189 aa).

Tyrosine 15 is a tRNA binding site. Residue histidine 20 is the Proton acceptor of the active site. TRNA-binding residues include phenylalanine 66, asparagine 68, and asparagine 114.

Belongs to the PTH family. Monomer.

It localises to the cytoplasm. The enzyme catalyses an N-acyl-L-alpha-aminoacyl-tRNA + H2O = an N-acyl-L-amino acid + a tRNA + H(+). Hydrolyzes ribosome-free peptidyl-tRNAs (with 1 or more amino acids incorporated), which drop off the ribosome during protein synthesis, or as a result of ribosome stalling. In terms of biological role, catalyzes the release of premature peptidyl moieties from peptidyl-tRNA molecules trapped in stalled 50S ribosomal subunits, and thus maintains levels of free tRNAs and 50S ribosomes. The sequence is that of Peptidyl-tRNA hydrolase from Streptococcus gordonii (strain Challis / ATCC 35105 / BCRC 15272 / CH1 / DL1 / V288).